A 698-amino-acid polypeptide reads, in one-letter code: Sialic acid-binding Ig-like lectin 11 (698 aa).

An N-terminal signal peptide occupies residues Met1 to Ser27. At Leu28–Leu561 the chain is on the extracellular side. The Ig-like V-type domain maps to Asp31–Glu134. 3 cysteine pairs are disulfide-bonded: Cys49–Cys186, Cys54–Cys114, and Cys177–Cys228. 2 N-linked (GlcNAc...) asparagine glycosylation sites follow: Asn55 and Asn90. An N-acetylneuraminate-binding site is contributed by Arg132. 3 consecutive Ig-like C2-type domains span residues Pro159 to Arg244, Pro251 to Ser350, and Pro355 to Ser452. Asn262 carries an N-linked (GlcNAc...) asparagine glycan. Cys287 and Cys334 are disulfide-bonded. Residues Asn366 and Asn375 are each glycosylated (N-linked (GlcNAc...) asparagine). A disulfide bridge connects residues Cys391 and Cys436. 2 N-linked (GlcNAc...) asparagine glycosylation sites follow: Asn497 and Asn515. The chain crosses the membrane as a helical span at residues Gly562–Val584. At Lys585–Lys698 the chain is on the cytoplasmic side. Positions Ala596 to Gly635 are disordered. An ITIM motif motif is present at residues Leu642–Leu647. Tyr668 carries the phosphotyrosine modification. A disordered region spans residues Thr675 to Lys698.

Belongs to the immunoglobulin superfamily. SIGLEC (sialic acid binding Ig-like lectin) family. Interacts with PTPN6/SHP-1 and PTPN11/SHP-2 upon phosphorylation. Phosphorylated on tyrosine residues. Expressed by macrophages in various tissues including Kupffer cells. Also found in brain microglia.

It is found in the membrane. Functionally, putative adhesion molecule that mediates sialic-acid dependent binding to cells. Preferentially binds to alpha-2,8-linked sialic acid. The sialic acid recognition site may be masked by cis interactions with sialic acids on the same cell surface. In the immune response, may act as an inhibitory receptor upon ligand induced tyrosine phosphorylation by recruiting cytoplasmic phosphatase(s) via their SH2 domain(s) that block signal transduction through dephosphorylation of signaling molecules. The protein is Sialic acid-binding Ig-like lectin 11 (SIGLEC11) of Homo sapiens (Human).